We begin with the raw amino-acid sequence, 505 residues long: Lysine--tRNA ligase (505 aa).

Glu-415 and Glu-422 together coordinate Mg(2+).

Belongs to the class-II aminoacyl-tRNA synthetase family. Homodimer. It depends on Mg(2+) as a cofactor.

The protein localises to the cytoplasm. It catalyses the reaction tRNA(Lys) + L-lysine + ATP = L-lysyl-tRNA(Lys) + AMP + diphosphate. The chain is Lysine--tRNA ligase from Edwardsiella ictaluri (strain 93-146).